Here is a 515-residue protein sequence, read N- to C-terminus: Aldehyde dehydrogenase tropH (515 aa).

238–243 (GSVATG) is a binding site for NAD(+). Glu260 functions as the Proton acceptor in the catalytic mechanism. Cys295 (nucleophile) is an active-site residue.

It belongs to the aldehyde dehydrogenase family.

It catalyses the reaction an aldehyde + NAD(+) + H2O = a carboxylate + NADH + 2 H(+). Its pathway is secondary metabolite biosynthesis. Aldehyde dehydrogenase; part of the gene cluster that mediates the biosynthesis of the tropolone class of fungal maleic anhydrides. The pathway begins with the synthesis of 3-methylorcinaldehyde by the non-reducing polyketide synthase (PKS) tropA. 3-methylorcinaldehyde is the substrate for the FAD-dependent monooxygenase tropB to yield a dearomatized hydroxycyclohexadione. The 2-oxoglutarate-dependent dioxygenase tropC then performs the oxidative ring expansion to provide the first tropolone metabolite stipitaldehyde. Trop D converts stipitaldehyde into stipitacetal which is in turn converted to stipitalide by the short-chain dehydrogenase/reductase tropE. The next steps involve tropF, tropG, tropH, tropI and tropJ to form successive tropolone maleic anhydrides including stipitaldehydic, stipitatonic and stipitatic acids. The polypeptide is Aldehyde dehydrogenase tropH (Talaromyces stipitatus (strain ATCC 10500 / CBS 375.48 / QM 6759 / NRRL 1006) (Penicillium stipitatum)).